The following is a 695-amino-acid chain: Scarecrow-like protein 31 (695 aa).

Disordered regions lie at residues 105–136 and 234–260; these read VISD…NSSN and ISKT…RSKQ. Over residues 113–136 the composition is skewed to low complexity; that stretch reads SSIPNNSITTSSSSNSGDYSNSSN. Positions 233–266 form a coiled coil; it reads AISKTRKNHHEREEEEDDLEEARRRSKQFAVNEE. A GRAS domain is found at 306–693; sequence AKKKSRAVDF…RILFSSSCWV (388 aa). The interval 313 to 377 is leucine repeat I (LRI); sequence VDFRTLLTLC…EGSTGTMIQS (65 aa). The VHIID stretch occupies residues 396–461; that stretch reads YSVFLSASPF…PGLRKLRITG (66 aa). Positions 427–431 match the VHIID motif; that stretch reads LHIVD. The segment at 477 to 509 is leucine repeat II (LRII); sequence DTGRRLTEYCKRFGVPFEYNAIASKNWETIKME. The PFYRE stretch occupies residues 519–614; sequence LAVNAVLRFK…GEFYGREVMN (96 aa). An SAW region spans residues 617-693; sequence ACEGVDRVER…RILFSSSCWV (77 aa).

The protein belongs to the GRAS family. Expressed in seedlings, roots, cotyledons, leaves and sepals.

It is found in the nucleus. Functionally, probable transcription factor involved in plant development. The polypeptide is Scarecrow-like protein 31 (SCL31) (Arabidopsis thaliana (Mouse-ear cress)).